We begin with the raw amino-acid sequence, 211 residues long: Glutathione S-transferase class-mu 28 kDa isozyme (211 aa).

Position 2 is an N-acetylalanine (alanine 2). Residues 4-86 (EHIKVIYFDG…YMAKKHHMMG (83 aa)) form the GST N-terminal domain. Glutathione contacts are provided by residues tyrosine 10, 10-11 (YF), arginine 16, 41-45 (WPKIK), leucine 53, 55-56 (AV), and 70-71 (ES). Residues 88–211 (TDEEYYSVEK…YLSNRPATPF (124 aa)) form the GST C-terminal domain.

It belongs to the GST superfamily. Mu family. Homodimer. As to expression, in the adult, expressed in excretory epithelial cells but absent from the caecal epithelium and flame cells. Also expressed in the tegument and its extensions into the parenchyma. In the schistosomulum, expressed in the tegument and associated structures. Not expressed in digestive tract, reproductive organs or muscles (at protein level).

It carries out the reaction RX + glutathione = an S-substituted glutathione + a halide anion + H(+). In terms of biological role, conjugation of reduced glutathione to a wide number of exogenous and endogenous hydrophobic electrophiles. Functionally, GST isoenzymes appear to play a central role in the parasite detoxification system. Other functions are also suspected including a role in increasing the solubility of haematin in the parasite gut. This Schistosoma mansoni (Blood fluke) protein is Glutathione S-transferase class-mu 28 kDa isozyme (GST28).